A 217-amino-acid chain; its full sequence is 3,4-dihydroxy-2-butanone 4-phosphate synthase (217 aa).

D-ribulose 5-phosphate-binding positions include 37–38 (RE), D42, 150–154 (RRGHT), and E174. E38 lines the Mg(2+) pocket. Mg(2+) is bound at residue H153.

It belongs to the DHBP synthase family. In terms of assembly, homodimer. Mg(2+) is required as a cofactor. The cofactor is Mn(2+).

The enzyme catalyses D-ribulose 5-phosphate = (2S)-2-hydroxy-3-oxobutyl phosphate + formate + H(+). It functions in the pathway cofactor biosynthesis; riboflavin biosynthesis; 2-hydroxy-3-oxobutyl phosphate from D-ribulose 5-phosphate: step 1/1. Functionally, catalyzes the conversion of D-ribulose 5-phosphate to formate and 3,4-dihydroxy-2-butanone 4-phosphate. This chain is 3,4-dihydroxy-2-butanone 4-phosphate synthase, found in Shewanella sediminis (strain HAW-EB3).